Here is a 275-residue protein sequence, read N- to C-terminus: 4-diphosphocytidyl-2-C-methyl-D-erythritol kinase (275 aa).

Lysine 8 is a catalytic residue. 86–96 contacts ATP; the sequence is PEGAGLGGGSS. Aspartate 125 is an active-site residue.

This sequence belongs to the GHMP kinase family. IspE subfamily.

The catalysed reaction is 4-CDP-2-C-methyl-D-erythritol + ATP = 4-CDP-2-C-methyl-D-erythritol 2-phosphate + ADP + H(+). Its pathway is isoprenoid biosynthesis; isopentenyl diphosphate biosynthesis via DXP pathway; isopentenyl diphosphate from 1-deoxy-D-xylulose 5-phosphate: step 3/6. Its function is as follows. Catalyzes the phosphorylation of the position 2 hydroxy group of 4-diphosphocytidyl-2C-methyl-D-erythritol. The chain is 4-diphosphocytidyl-2-C-methyl-D-erythritol kinase from Thermus thermophilus (strain ATCC BAA-163 / DSM 7039 / HB27).